Here is a 155-residue protein sequence, read N- to C-terminus: 6,7-dimethyl-8-ribityllumazine synthase (155 aa).

5-amino-6-(D-ribitylamino)uracil is bound by residues F23, 57–59, and 81–83; these read AFE and AVI. 86 to 87 is a (2S)-2-hydroxy-3-oxobutyl phosphate binding site; the sequence is ST. H89 acts as the Proton donor in catalysis. 5-amino-6-(D-ribitylamino)uracil is bound at residue F114. Position 128 (R128) interacts with (2S)-2-hydroxy-3-oxobutyl phosphate.

The protein belongs to the DMRL synthase family.

It carries out the reaction (2S)-2-hydroxy-3-oxobutyl phosphate + 5-amino-6-(D-ribitylamino)uracil = 6,7-dimethyl-8-(1-D-ribityl)lumazine + phosphate + 2 H2O + H(+). Its pathway is cofactor biosynthesis; riboflavin biosynthesis; riboflavin from 2-hydroxy-3-oxobutyl phosphate and 5-amino-6-(D-ribitylamino)uracil: step 1/2. Functionally, catalyzes the formation of 6,7-dimethyl-8-ribityllumazine by condensation of 5-amino-6-(D-ribitylamino)uracil with 3,4-dihydroxy-2-butanone 4-phosphate. This is the penultimate step in the biosynthesis of riboflavin. The sequence is that of 6,7-dimethyl-8-ribityllumazine synthase from Desulfatibacillum aliphaticivorans.